A 364-amino-acid chain; its full sequence is Histidinol-phosphate aminotransferase (364 aa).

K226 is modified (N6-(pyridoxal phosphate)lysine).

This sequence belongs to the class-II pyridoxal-phosphate-dependent aminotransferase family. Histidinol-phosphate aminotransferase subfamily. In terms of assembly, homodimer. Pyridoxal 5'-phosphate is required as a cofactor.

It catalyses the reaction L-histidinol phosphate + 2-oxoglutarate = 3-(imidazol-4-yl)-2-oxopropyl phosphate + L-glutamate. The protein operates within amino-acid biosynthesis; L-histidine biosynthesis; L-histidine from 5-phospho-alpha-D-ribose 1-diphosphate: step 7/9. The sequence is that of Histidinol-phosphate aminotransferase from Campylobacter jejuni (strain RM1221).